The following is a 321-amino-acid chain: Olfactory receptor 3A2 (321 aa).

Residues 1-35 (MSLQKLMEPEAGTNRTAVAEFILLGLVQTEEMQPV) lie on the Extracellular side of the membrane. Asn14 carries an N-linked (GlcNAc...) asparagine glycan. The chain crosses the membrane as a helical span at residues 36–58 (VFVLLLFAYLVTTGGNLSILAAV). Residues 59–66 (LVEPKLHA) are Cytoplasmic-facing. A helical transmembrane segment spans residues 67–88 (PMYFFLGNLSVLDVGCITVTVP). Over 89 to 109 (AMLGRLLSHKSTISYDACLSQ) the chain is Extracellular. A disulfide bond links Cys106 and Cys198. The helical transmembrane segment at 110 to 129 (LFFFHLLAGMDCFLLTAMAY) threads the bilayer. Residues 130-149 (DRLLAICQPLTYSTRMSQTV) are Cytoplasmic-facing. Residues 150-167 (QRMLVAASLACAFTNALT) form a helical membrane-spanning segment. The Extracellular segment spans residues 168–205 (HTVAMSTLNFCGPNEVNHFYCDLPQLFQLSCSSTQLNE). The chain crosses the membrane as a helical span at residues 206 to 229 (LLLFAVGFIMAGTPLVLIITAYSH). Topologically, residues 230-246 (VAAAVLRIRSVEGRKKA) are cytoplasmic. Residues 247-270 (FSTCGSHLTVVCLFFGRGIFNYMR) form a helical membrane-spanning segment. Topologically, residues 271 to 281 (LGSEEASDKDK) are extracellular. A helical transmembrane segment spans residues 282 to 301 (GVGVFNTVINPMLNPLIYSL). Residues 302-321 (RNPDVQGALWQIFLGRRSLT) lie on the Cytoplasmic side of the membrane.

The protein belongs to the G-protein coupled receptor 1 family.

The protein resides in the cell membrane. In terms of biological role, odorant receptor. This Homo sapiens (Human) protein is Olfactory receptor 3A2 (OR3A2).